The sequence spans 120 residues: Large ribosomal subunit protein uL18 (120 aa).

It belongs to the universal ribosomal protein uL18 family. In terms of assembly, part of the 50S ribosomal subunit; part of the 5S rRNA/L5/L18 subcomplex. In B.stearothermophilus only 2 proteins, L5 and L18 have been shown to be part of this subcomplex, unlike the case in E.coli and T.thermophilus where L25 (TL5) is also found. Post-translationally, the protein, when overexpressed in E.coli, contains a phosphoserine, which is required for the protein to bind to 5S rRNA. It has been suggested, based solely on amino acid conservation, that this occurs on Ser-57.

This is one of the proteins that bind and probably mediate the attachment of the 5S RNA into the large ribosomal subunit, where it forms part of the central protuberance. This chain is Large ribosomal subunit protein uL18 (rplR), found in Geobacillus stearothermophilus (Bacillus stearothermophilus).